The chain runs to 150 residues: Small ribosomal subunit protein bS6 (150 aa).

The tract at residues 99-150 is disordered; the sequence is GPSAMLQKRDRDDRGERGERGFGGGGFGGGRDREDRPRRGRDREEAATEETF. Basic and acidic residues-rich tracts occupy residues 105-118 and 128-144; these read QKRD…RGER and GRDR…REEA.

It belongs to the bacterial ribosomal protein bS6 family.

In terms of biological role, binds together with bS18 to 16S ribosomal RNA. The chain is Small ribosomal subunit protein bS6 from Azorhizobium caulinodans (strain ATCC 43989 / DSM 5975 / JCM 20966 / LMG 6465 / NBRC 14845 / NCIMB 13405 / ORS 571).